The primary structure comprises 204 residues: ATP-dependent Clp protease proteolytic subunit (204 aa).

The Nucleophile role is filled by Ser101. His126 is a catalytic residue.

The protein belongs to the peptidase S14 family. Component of the chloroplastic Clp protease core complex.

It localises to the plastid. Its subcellular location is the chloroplast stroma. It carries out the reaction Hydrolysis of proteins to small peptides in the presence of ATP and magnesium. alpha-casein is the usual test substrate. In the absence of ATP, only oligopeptides shorter than five residues are hydrolyzed (such as succinyl-Leu-Tyr-|-NHMec, and Leu-Tyr-Leu-|-Tyr-Trp, in which cleavage of the -Tyr-|-Leu- and -Tyr-|-Trp bonds also occurs).. In terms of biological role, cleaves peptides in various proteins in a process that requires ATP hydrolysis. Has a chymotrypsin-like activity. Plays a major role in the degradation of misfolded proteins. The polypeptide is ATP-dependent Clp protease proteolytic subunit (Anthoceros angustus (Hornwort)).